The following is a 455-amino-acid chain: MLADNLVEEFEMEDEPWYDHRDLQQDLQLAAELGKTLLDRNTELEDSLQQMYTTNQEQLQEIEYLTKQVELLRQMNEQHAKVYEQLDVTARELEETNQKLVAESKASQQKILSLTETIECLQTNIDHLQSQVEELKSSSQGRGRQKACDQEKPAPSFSCLKELYDLRQHFVYDHVFAEKITSLQSQQSPDEEENEHLKKAVTMLQAQLSLERKKRVSVEAEYKVVLKENSELEQQLGATDAYRARALELEAEVAEMRQMLQAEHPFVNGVEKLVPDSLFVPFKEPSQSLLEEMFLAAPEAPRKPLKRSSSETALSSLAGDDIVKDHEDTCIRRAKAVKQRGISLLHEVDTQYSALKVKYEELLKKCQQEQDSLSHKAVQTSRLLTRDLTGLVTQSEAGASGWEPTPVSPESISSPTTTPPEYKALFKEIFSCIKKTKQEIDEQRTKYPSLSSYSY.

Coiled coils occupy residues 37 to 141 (LLDR…SSQG) and 191 to 264 (EEEN…QAEH). Residues 132–142 (VEELKSSSQGR) show a composition bias toward polar residues. Residues 132–152 (VEELKSSSQGRGRQKACDQEK) form a disordered region. Phosphoserine is present on Ser310. Residues 395-419 (SEAGASGWEPTPVSPESISSPTTTP) are disordered. A compositionally biased stretch (low complexity) spans 403 to 419 (EPTPVSPESISSPTTTP).

It belongs to the CDR2 family. Expressed in brain and testis (at protein level). Expressed in the cerebellum, cerebral cortex, heart, lung, spleen, ovary, kidney and testis.

The protein is Cerebellar degeneration-related protein 2 (Cdr2) of Mus musculus (Mouse).